We begin with the raw amino-acid sequence, 317 residues long: Ubiquinone biosynthesis protein COQ9, mitochondrial (317 aa).

A mitochondrion-targeting transit peptide spans 1-46; it reads MAASVARVLKAAGGRQLLLMVARRRPVLRQPFLLMPRKFWGTSALR. Residues 45–97 form a disordered region; the sequence is LRSEDQKQPPFSSTSAHAGTPEHAEEQYQQQQPPPRYTDQAGEESEGYESEEQ. Acidic residues predominate over residues 85–96; that stretch reads AGEESEGYESEE. Residue Arg243 coordinates a 1,2-diacylglycero-3-phosphoethanolamine.

This sequence belongs to the COQ9 family. In terms of assembly, homodimer. Heterodimer; two heterodimers of COQ7:COQ9 come together on the same side of the lipid pseudo-bilayer and form a curved tetramer with a hydrophobic surface suitable for membrane interaction. These two tetramers assemble into a soluble octamer with a pseudo-bilayer of lipids captured within. Interacts with COQ7; this interaction allows ubiquinone (CoQ) isoprene intermediates presentation to COQ7 and facilitates the COQ7-mediated hydroxylase step.

It localises to the mitochondrion. It functions in the pathway cofactor biosynthesis; ubiquinone biosynthesis. Its function is as follows. Membrane-associated protein that warps the membrane surface to access and bind aromatic isoprenes with high specificity, including ubiquinone (CoQ) isoprene intermediates and presents them directly to COQ7, therefore facilitating the COQ7-mediated hydroxylase step. Participates in the biosynthesis of coenzyme Q, also named ubiquinone, an essential lipid-soluble electron transporter for aerobic cellular respiration. The chain is Ubiquinone biosynthesis protein COQ9, mitochondrial from Xenopus tropicalis (Western clawed frog).